Here is a 418-residue protein sequence, read N- to C-terminus: MLHPRARTMLLLSLPAVAIGIASSLILIVVMKIASVLQNLLWQRLPGTLGIAQDSPLWIIGVLTLTGIAVGLVIRFSQGHAGPDPACEPLIGAPVPPSALPGLIVALILGLAGGVSLGPEHPIMTVNIALAVAIGARLLPRVNRMEWTILASAGTIGALFGTPVAAALIFSQTLNGSSEVPLWDRLFAPLMAAAAGALTTGLFFHPHFSLPIAHYGQMEMTDILSGAIVAAIAIAAGMVAVWCLPRLHAMMHQMKNPVLVLGIGGFILGILGVIGGPVSLFKGLDEMQQMVANQAFSTSDYFLLAVIKLAALVVAAASGFRGGRIFPAVFVGVALGLMLHEHVPAVPAAITVSCAILGIVLVVTRDGWLSLFMAAVVVPNTTLLPLLCIVMLPAWLLLAGKPMMMVNRSKQQPPHDNV.

The next 12 membrane-spanning stretches (helical) occupy residues 10 to 30 (LLLS…LIVV), 54 to 74 (DSPL…GLVI), 99 to 119 (ALPG…SLGP), 120 to 140 (EHPI…RLLP), 149 to 169 (ILAS…AALI), 186 to 206 (LFAP…FFHP), 223 to 243 (ILSG…AVWC), 258 to 278 (VLVL…GGPV), 300 to 320 (DYFL…ASGF), 322 to 342 (GGRI…LHEH), 343 to 363 (VPAV…VLVV), and 371 to 391 (LFMA…CIVM).

Belongs to the chloride channel (TC 2.A.49) family.

The protein resides in the cell membrane. The sequence is that of Putative ion-transport protein YfeO from Escherichia coli O9:H4 (strain HS).